A 456-amino-acid chain; its full sequence is tRNA modification GTPase MnmE (456 aa).

Residues K29, E87, and R126 each contribute to the (6S)-5-formyl-5,6,7,8-tetrahydrofolate site. Residues 222–380 form the TrmE-type G domain; the sequence is GYKLAIIGRP…LLSLLASWLD (159 aa). N232 provides a ligand contact to K(+). GTP-binding positions include 232–237, 251–257, and 276–279; these read NVGKSS, SDIPGTT, and DTAG. S236 contributes to the Mg(2+) binding site. Positions 251, 253, and 256 each coordinate K(+). T257 contributes to the Mg(2+) binding site. K456 provides a ligand contact to (6S)-5-formyl-5,6,7,8-tetrahydrofolate.

It belongs to the TRAFAC class TrmE-Era-EngA-EngB-Septin-like GTPase superfamily. TrmE GTPase family. Homodimer. Heterotetramer of two MnmE and two MnmG subunits. K(+) is required as a cofactor.

Its subcellular location is the cytoplasm. Functionally, exhibits a very high intrinsic GTPase hydrolysis rate. Involved in the addition of a carboxymethylaminomethyl (cmnm) group at the wobble position (U34) of certain tRNAs, forming tRNA-cmnm(5)s(2)U34. The chain is tRNA modification GTPase MnmE from Wolinella succinogenes (strain ATCC 29543 / DSM 1740 / CCUG 13145 / JCM 31913 / LMG 7466 / NCTC 11488 / FDC 602W) (Vibrio succinogenes).